The primary structure comprises 231 residues: Large ribosomal subunit protein uL1 (231 aa).

The protein belongs to the universal ribosomal protein uL1 family. As to quaternary structure, part of the 50S ribosomal subunit.

In terms of biological role, binds directly to 23S rRNA. The L1 stalk is quite mobile in the ribosome, and is involved in E site tRNA release. Functionally, protein L1 is also a translational repressor protein, it controls the translation of the L11 operon by binding to its mRNA. The protein is Large ribosomal subunit protein uL1 of Paracidovorax citrulli (strain AAC00-1) (Acidovorax citrulli).